A 298-amino-acid polypeptide reads, in one-letter code: MFYSLMRESKIVIEYDGRGYHFDALSNYDASTSFQEFKTLRRTIHNRTNYADSIINAQDPSSISLAINFSTTLIESNFFDWMGFTREGNSLFLPRNTPNIEPIMFNMYIINHNNSCIYFENCYVSTVDFSLDKSIPILNVGIESGKFSEVSTFRDGYTITQGEVLPYSAPAVYTNSSPLPALISASMSFQQQCSWREDRNIFDINKIYTNKRAYVNEMNASATLAFYYVKRLVGDKFLNLDPETRTPLIIKNKYVSITFPLARISKRLNFSDLYQVEYDVIPTADSDPVEINFFGERK.

Homotrimer. Forms a pseudo-hexameric ring. Interacts with collar protein p132, DTP-pb9 and tail tube protein pb6.

Its subcellular location is the virion. Functionally, forms the simplified baseplate, together with the p132 collar protein ring and the cone (DTP-pb9 and BHP-pb3). This chain is Baseplate tube protein p140, found in Escherichia phage T5 (Enterobacteria phage T5).